Here is a 306-residue protein sequence, read N- to C-terminus: Nucleotide-binding protein RSal33209_2275 (306 aa).

Gly-29–Ser-36 is a binding site for ATP. Asp-80–Gly-83 serves as a coordination point for GTP.

The protein belongs to the RapZ-like family.

Functionally, displays ATPase and GTPase activities. The polypeptide is Nucleotide-binding protein RSal33209_2275 (Renibacterium salmoninarum (strain ATCC 33209 / DSM 20767 / JCM 11484 / NBRC 15589 / NCIMB 2235)).